The sequence spans 75 residues: Movement protein TGBp3 (75 aa).

Residues 1-2 lie on the Lumenal side of the membrane; the sequence is MR. A helical transmembrane segment spans residues 3-23; it reads VLDLILALITAAVVGYTIALV. Residues 24–75 lie on the Cytoplasmic side of the membrane; sequence SNSGCYVHFDGRSATTTCPPGPWVESIANGLYTAGLARPHPEPECERRQSSW.

Belongs to the Tymovirales TGBp3 protein family.

The protein resides in the host endoplasmic reticulum membrane. Functionally, plays a role in viral cell-to-cell propagation, by facilitating genome transport to neighboring plant cells through plasmosdesmata. May induce the formation of granular vesicles derived from the Endoplasmic reticulum, which align on actin filaments. The sequence is that of Movement protein TGBp3 from Strawberry mild yellow edge-associated virus (SMYEaV).